We begin with the raw amino-acid sequence, 193 residues long: MTSPMKGLLKGLRYIARIFEDEKEPEMQIGIPTDVKHVAHIGWEGPSATTPSWMHDFKPTDQTKTETKGTSNKKPGSSGEKHRKGRRKTSTGNNSPTESPSRVGGSVRPSKRNTGKQREQNTGSGSESGSGLELPQQTDQFVVPKQSKQKKSKGSATGGGEPPPSNEPSNKKETDISVRAVYPCAGLGSSTGR.

The CRIB domain maps to 29–42 (IGIPTDVKHVAHIG). A disordered region spans residues 42–193 (GWEGPSATTP…CAGLGSSTGR (152 aa)). The span at 55 to 67 (HDFKPTDQTKTET) shows a compositional bias: basic and acidic residues. A compositionally biased stretch (polar residues) spans 90–100 (STGNNSPTESP). Positions 123–134 (GSGSESGSGLEL) are enriched in low complexity.

Interacts with ARAC11/ROP1. In terms of tissue distribution, expressed in flowers and pollen.

The protein resides in the cell membrane. Its function is as follows. Functions as a downstream effector of Rho-related GTP binding proteins of the 'Rho of Plants' (ROPs) family. Participates in the propagation of ROP GTPase signals in specific cellular responses. Is involved in pollen tube growth regulation through its interaction with ARAC11/ROP1. The sequence is that of CRIB domain-containing protein RIC5 (RIC5) from Arabidopsis thaliana (Mouse-ear cress).